We begin with the raw amino-acid sequence, 645 residues long: MSVSANISVEAPIESQIQEIAYDGTEIYQLPPTLSEHLAKCAAKIDFSKTVNDLDLVKQSIKKEDEKKDDDSKDAAAHFQSSLWPWDSVRNKLKDAFTEVCVLSDVLAIAKEKRFMVLDPIPQEPPEVKQMVQVYARKKALASAANILLTGAERLKTAHTDQGGNRSAPDFHIELLRLRRNWRLKKVSNTIIGDLSYRTAGSKFMHPGMFEVTKAEDEDNNDENASAAAGTIATTGTAPEPKLTSLKVNVPTELQGVAFIKVITQKDQGDLCTATLNMMGSTQLFPQAGEWQKTLDFAQNVLFCKELFNQLAREAVQLQAPIPHVVVGNQIRATLLPGIQLVISLCHSTSSDSNNSSEPIKDHDHVLEHSLHQLLREFHHKNTHHPFPHPASAPLGPSKKRMLAGPSAFDRYELLEMTKSQTLLEQIIAQAQHIFTRRRAQYVLDTLAREVKDPQITSHWNAMNSPTMSCVKINITSHGYDANLRTSLVIHVKERSLKCICRDGRIMHMSYEMQELRDLILYQISQHQIVCLQSLAKCMAWQILSNSSHLGIGSVEPLGNASSCVLASPNSDRLIAVQVRCDPQLDVKVYIAQSPGKDFFPGSLVQGRHWEHLGGHFKELRFDKMEGKNFHNKMEFLMASLTSQT.

It belongs to the Mediator complex subunit 17 family. Component of the Mediator complex.

It localises to the nucleus. Its function is as follows. Component of the Mediator complex, a coactivator involved in the regulated transcription of nearly all RNA polymerase II-dependent genes. Mediator functions as a bridge to convey information from gene-specific regulatory proteins to the basal RNA polymerase II transcription machinery. Mediator is recruited to promoters by direct interactions with regulatory proteins and serves as a scaffold for the assembly of a functional preinitiation complex with RNA polymerase II and the general transcription factors. This chain is Mediator of RNA polymerase II transcription subunit 17 (MED17), found in Aedes aegypti (Yellowfever mosquito).